The following is a 171-amino-acid chain: UPF0725 protein At3g25080 (171 aa).

Belongs to the UPF0725 (EMB2204) family.

The sequence is that of UPF0725 protein At3g25080 from Arabidopsis thaliana (Mouse-ear cress).